The chain runs to 258 residues: Aspartate/glutamate leucyltransferase (258 aa).

The protein belongs to the R-transferase family. Bpt subfamily.

Its subcellular location is the cytoplasm. The enzyme catalyses N-terminal L-glutamyl-[protein] + L-leucyl-tRNA(Leu) = N-terminal L-leucyl-L-glutamyl-[protein] + tRNA(Leu) + H(+). The catalysed reaction is N-terminal L-aspartyl-[protein] + L-leucyl-tRNA(Leu) = N-terminal L-leucyl-L-aspartyl-[protein] + tRNA(Leu) + H(+). Functions in the N-end rule pathway of protein degradation where it conjugates Leu from its aminoacyl-tRNA to the N-termini of proteins containing an N-terminal aspartate or glutamate. This chain is Aspartate/glutamate leucyltransferase, found in Bradyrhizobium diazoefficiens (strain JCM 10833 / BCRC 13528 / IAM 13628 / NBRC 14792 / USDA 110).